Reading from the N-terminus, the 550-residue chain is Pectinesterase 2.1 (550 aa).

N-linked (GlcNAc...) asparagine glycosylation is present at asparagine 179. Residues threonine 312 and glutamine 342 each contribute to the substrate site. The cysteines at positions 331 and 358 are disulfide-linked. The active-site Proton donor is the aspartate 365. The active-site Nucleophile is the aspartate 386. A disulfide bridge links cysteine 399 with cysteine 433. Arginine 454 and tryptophan 456 together coordinate substrate.

The protein in the N-terminal section; belongs to the PMEI family. It in the C-terminal section; belongs to the pectinesterase family.

Its subcellular location is the secreted. The protein resides in the cell wall. It catalyses the reaction [(1-&gt;4)-alpha-D-galacturonosyl methyl ester](n) + n H2O = [(1-&gt;4)-alpha-D-galacturonosyl](n) + n methanol + n H(+). Its pathway is glycan metabolism; pectin degradation; 2-dehydro-3-deoxy-D-gluconate from pectin: step 1/5. Functionally, pectinesterase may play a role in cell wall metabolism during fruit growth and development prior to ripening and may be required for preparing cell walls for softening by polygalacturonase during fruit ripening. This chain is Pectinesterase 2.1 (PME2.1), found in Solanum lycopersicum (Tomato).